A 179-amino-acid polypeptide reads, in one-letter code: MSLKDRFDRFIDYFTEDEDSSLPYEKRDEPVFTPVNSSQEPALPMNQPSQSVGTKENNITRLHARQQELANQSQRATDKVIIDVRYPRKYEDATEIVDLLAGNESILIDFQYMTEVQARRCLDYLDGACHVLAGNLKKVASTMYLLTPVNVIVNVEDIRLPDEDQQGEFGFDMKRNRVR.

A disordered region spans residues 22-53 (LPYEKRDEPVFTPVNSSQEPALPMNQPSQSVG). Residues 34–53 (PVNSSQEPALPMNQPSQSVG) are compositionally biased toward polar residues.

This sequence belongs to the SepF family. Homodimer. Interacts with FtsZ.

It is found in the cytoplasm. In terms of biological role, cell division protein that is part of the divisome complex and is recruited early to the Z-ring. Probably stimulates Z-ring formation, perhaps through the cross-linking of FtsZ protofilaments. Its function overlaps with FtsA. The sequence is that of Cell division protein SepF from Streptococcus pneumoniae (strain P1031).